The chain runs to 214 residues: Response regulator GacA (214 aa).

Positions 3 to 119 constitute a Response regulatory domain; that stretch reads RVLVVDDHDL…EMVQAIRLVF (117 aa). A 4-aspartylphosphate modification is found at aspartate 54. One can recognise an HTH luxR-type domain in the interval 143–208; it reads NNSPFDLLSE…ELALLAVRHG (66 aa). The segment at residues 167–186 is a DNA-binding region (H-T-H motif); sequence VQTISDKLCLSPKTVNTYRY.

Required for production of extracellular enzymes and fluorescent siderophores. This Pseudomonas viridiflava (Phytomonas viridiflava) protein is Response regulator GacA (gacA).